The primary structure comprises 392 residues: CCA-adding enzyme (392 aa).

Residues serine 45 and lysine 48 each contribute to the ATP site. CTP is bound by residues serine 45 and lysine 48. 3 residues coordinate Mg(2+): aspartate 55, aspartate 57, and glutamate 106. Positions 129, 148, and 157 each coordinate ATP. CTP-binding residues include histidine 129, lysine 148, and tyrosine 157.

This sequence belongs to the tRNA nucleotidyltransferase/poly(A) polymerase family. Archaeal CCA-adding enzyme subfamily. As to quaternary structure, homodimer. Requires Mg(2+) as cofactor.

It carries out the reaction a tRNA precursor + 2 CTP + ATP = a tRNA with a 3' CCA end + 3 diphosphate. The catalysed reaction is a tRNA with a 3' CCA end + 2 CTP + ATP = a tRNA with a 3' CCACCA end + 3 diphosphate. Catalyzes the addition and repair of the essential 3'-terminal CCA sequence in tRNAs without using a nucleic acid template. Adds these three nucleotides in the order of C, C, and A to the tRNA nucleotide-73, using CTP and ATP as substrates and producing inorganic pyrophosphate. tRNA 3'-terminal CCA addition is required both for tRNA processing and repair. Also involved in tRNA surveillance by mediating tandem CCA addition to generate a CCACCA at the 3' terminus of unstable tRNAs. While stable tRNAs receive only 3'-terminal CCA, unstable tRNAs are marked with CCACCA and rapidly degraded. In Nanoarchaeum equitans (strain Kin4-M), this protein is CCA-adding enzyme.